Here is a 372-residue protein sequence, read N- to C-terminus: Probable basic-leucine zipper transcription factor G (372 aa).

Disordered regions lie at residues 1-20 (MLSVWNLPVEQQPQQQQQQQ) and 176-234 (TTNN…EKFE). Composition is skewed to low complexity over residues 11–20 (QQPQQQQQQQ) and 176–215 (TTNNNNNNNNNNNNNNNNNNSNNNNSNNNNINNNNNKSNT). Residues 223-234 (IRNSNSTFEKFE) are compositionally biased toward polar residues. A bZIP domain is found at 277–340 (ELKRQKRLIK…LILKAEVGQL (64 aa)). Residues 279–301 (KRQKRLIKNRESAHLSRQRKRER) are basic motif. The segment at 305–340 (LEHRVEELSSNSIDINKTLSSLENENLILKAEVGQL) is leucine-zipper.

This sequence belongs to the bZIP family.

It is found in the nucleus. Functionally, probable transcriptional regulator. The polypeptide is Probable basic-leucine zipper transcription factor G (bzpG) (Dictyostelium discoideum (Social amoeba)).